The sequence spans 98 residues: Putative septation protein SpoVG (98 aa).

This sequence belongs to the SpoVG family.

Functionally, essential for sporulation. Interferes with or is a negative regulator of the pathway leading to asymmetric septation. The chain is Putative septation protein SpoVG from Shouchella clausii (strain KSM-K16) (Alkalihalobacillus clausii).